Here is a 462-residue protein sequence, read N- to C-terminus: Major capsid protein (462 aa).

It belongs to the NCLDV major capsid protein family. In terms of assembly, homotrimer.

The protein resides in the virion. In terms of biological role, major capsid protein that self assembles to form an icosahedral capsid. Represents around 50% of the total virion protein mass. The chain is Major capsid protein (MCP) from Costelytra zealandica (CzIV).